The sequence spans 314 residues: 2,3-dihydroxyphenylpropionate/2,3-dihydroxicinnamic acid 1,2-dioxygenase 2 (314 aa).

The Proton donor role is filled by histidine 115. Histidine 179 serves as the catalytic Proton acceptor.

Belongs to the LigB/MhpB extradiol dioxygenase family. Homotetramer. It depends on Fe(2+) as a cofactor.

The enzyme catalyses 3-(2,3-dihydroxyphenyl)propanoate + O2 = (2Z,4E)-2-hydroxy-6-oxonona-2,4-dienedioate + H(+). It carries out the reaction (2E)-3-(2,3-dihydroxyphenyl)prop-2-enoate + O2 = (2Z,4E,7E)-2-hydroxy-6-oxonona-2,4,7-trienedioate + H(+). It functions in the pathway aromatic compound metabolism; 3-phenylpropanoate degradation. In terms of biological role, catalyzes the non-heme iron(II)-dependent oxidative cleavage of 2,3-dihydroxyphenylpropionic acid and 2,3-dihydroxicinnamic acid into 2-hydroxy-6-ketononadienedioate and 2-hydroxy-6-ketononatrienedioate, respectively. This chain is 2,3-dihydroxyphenylpropionate/2,3-dihydroxicinnamic acid 1,2-dioxygenase 2 (mhpB2), found in Pseudomonas putida (Arthrobacter siderocapsulatus).